The sequence spans 587 residues: Bifunctional dihydrofolate reductase-thymidylate synthase (587 aa).

Residues 9–237 (DIYAICACCK…TTLDFIIYSK (229 aa)) form the DHFR domain. 36 to 42 (GIGNAGV) provides a ligand contact to NADP(+). Asp51 lines the substrate pocket. NADP(+)-binding positions include 108 to 110 (KKS) and 129 to 132 (LSRT). Substrate is bound by residues Ile173, Tyr179, and Thr194. 174–181 (GGSSVYKE) contributes to the NADP(+) binding site. Residues 301-587 (NHPEYQYLNI…HDKINMDMAA (287 aa)) form a thymidylate synthase region. Arg324 is a binding site for dUMP. The active site involves Cys469. Residues His470, 488–492 (QRSCD), Asn500, and 530–532 (HVY) contribute to the dUMP site.

The protein in the N-terminal section; belongs to the dihydrofolate reductase family. It in the C-terminal section; belongs to the thymidylate synthase family. Homodimer.

It carries out the reaction (6S)-5,6,7,8-tetrahydrofolate + NADP(+) = 7,8-dihydrofolate + NADPH + H(+). The enzyme catalyses dUMP + (6R)-5,10-methylene-5,6,7,8-tetrahydrofolate = 7,8-dihydrofolate + dTMP. It functions in the pathway cofactor biosynthesis; tetrahydrofolate biosynthesis; 5,6,7,8-tetrahydrofolate from 7,8-dihydrofolate: step 1/1. Functionally, bifunctional enzyme. Involved in de novo dTMP biosynthesis. Key enzyme in folate metabolism. Catalyzes an essential reaction for de novo glycine and purine synthesis, DNA precursor synthesis, and for the conversion of dUMP to dTMP. In Plasmodium berghei (strain Anka), this protein is Bifunctional dihydrofolate reductase-thymidylate synthase.